Here is a 191-residue protein sequence, read N- to C-terminus: Hypoxanthine/guanine phosphoribosyltransferase (191 aa).

Belongs to the purine/pyrimidine phosphoribosyltransferase family. Archaeal HPRT subfamily. Homodimer.

The protein resides in the cytoplasm. It catalyses the reaction IMP + diphosphate = hypoxanthine + 5-phospho-alpha-D-ribose 1-diphosphate. It carries out the reaction GMP + diphosphate = guanine + 5-phospho-alpha-D-ribose 1-diphosphate. The protein operates within purine metabolism; IMP biosynthesis via salvage pathway; IMP from hypoxanthine: step 1/1. Catalyzes a salvage reaction resulting in the formation of IMP that is energically less costly than de novo synthesis. The protein is Hypoxanthine/guanine phosphoribosyltransferase of Methanocella arvoryzae (strain DSM 22066 / NBRC 105507 / MRE50).